The following is a 126-amino-acid chain: Holo-[acyl-carrier-protein] synthase (126 aa).

Positions 9 and 58 each coordinate Mg(2+).

Belongs to the P-Pant transferase superfamily. AcpS family. Mg(2+) serves as cofactor.

The protein resides in the cytoplasm. It carries out the reaction apo-[ACP] + CoA = holo-[ACP] + adenosine 3',5'-bisphosphate + H(+). Its function is as follows. Transfers the 4'-phosphopantetheine moiety from coenzyme A to a Ser of acyl-carrier-protein. This Escherichia fergusonii (strain ATCC 35469 / DSM 13698 / CCUG 18766 / IAM 14443 / JCM 21226 / LMG 7866 / NBRC 102419 / NCTC 12128 / CDC 0568-73) protein is Holo-[acyl-carrier-protein] synthase.